We begin with the raw amino-acid sequence, 634 residues long: MINIRFPDGSIREFEAGVNSLDVAKSISPSLAKATMAAYIDDQLKDAKDAINSNCELRLITVKDPEGLEILRHSCAHLLAHAVKELYPNTEVTIGPVVDNGFYYDFSFKESIGEADLPTIEKKMKELAKKSAPISYRVVPKAEAIEFFKAQGENYKVEIIDSIADEQMKIYTQDNFSDLCRGPHIPNTSVLKAFKLTKLAGAYWRGNSDNEMLTRIYGTCWATKEDLEQYLNMLEEAEKRDHRKIGKVLDLFHFQEDSPGIAFWHDNGVRIWRQVEDYMRASNNKYGCSEIRTPLIADFSLWQKSGHASKYAENMFATKSENRDFAIRPMNCPTCVQVYNTKLHSYRDLPIRMAEFGIVHRNEPSGSLHGLLRVRSFTQDDGHIFCTPEQVEEEVILMVQQCFEVYKDFGFNDFAVKIALRPENRIGDDETWDKSEQMLKNALDANNVSYELLPGEGAFYGPKIEFHLKDAIGRSWQCGTIQLDFSMPQRLGATYIDKNGEKQVPVMLHRAIVGSLERFIGMLIEHYAGNLPLWLAPVQVAVMGISNNQDDYCKEVFIMLEKNGIRAKLDLRNEKIGFKIREHTLLRVPYLVILGKNEQEQKIITIRKHSGEDLGQMSVDDFCAFLDKQIQAKE.

The region spanning 1 to 61 is the TGS domain; it reads MINIRFPDGS…NSNCELRLIT (61 aa). The interval 241–532 is catalytic; the sequence is DHRKIGKVLD…LIEHYAGNLP (292 aa). Cys332, His383, and His509 together coordinate Zn(2+).

It belongs to the class-II aminoacyl-tRNA synthetase family. In terms of assembly, homodimer. The cofactor is Zn(2+).

The protein localises to the cytoplasm. The enzyme catalyses tRNA(Thr) + L-threonine + ATP = L-threonyl-tRNA(Thr) + AMP + diphosphate + H(+). Its function is as follows. Catalyzes the attachment of threonine to tRNA(Thr) in a two-step reaction: L-threonine is first activated by ATP to form Thr-AMP and then transferred to the acceptor end of tRNA(Thr). Also edits incorrectly charged L-seryl-tRNA(Thr). The sequence is that of Threonine--tRNA ligase from Francisella tularensis subsp. tularensis (strain FSC 198).